Here is a 327-residue protein sequence, read N- to C-terminus: Probable cell division protein WhiA (327 aa).

A DNA-binding region (H-T-H motif) is located at residues 275–308 (SLEELGRLADPPMTKDAVAGRIRRLLSMADRKAK).

This sequence belongs to the WhiA family.

Functionally, involved in cell division and chromosome segregation. The chain is Probable cell division protein WhiA from Mycobacterium avium (strain 104).